Here is a 155-residue protein sequence, read N- to C-terminus: MSRRGTAEEKTAKSDPIYRNRLVNMLVNRILKNGKKSLAYQIIYRAVKKIQQKTETNPLSVLRQAIRGVTPDIAVKARRVGGSTHQVPIEIGSTQGKALAIRWLLGASRKRPGRNMDFRLSSELVDAAKGSGDAIRKKEETHRMAEANRAFAHFR.

This sequence belongs to the universal ribosomal protein uS7 family. As to quaternary structure, part of the 30S ribosomal subunit.

The protein resides in the plastid. The protein localises to the chloroplast. One of the primary rRNA binding proteins, it binds directly to 16S rRNA where it nucleates assembly of the head domain of the 30S subunit. The polypeptide is Small ribosomal subunit protein uS7cz/uS7cy (rps7-A) (Phalaenopsis aphrodite subsp. formosana (Moth orchid)).